The chain runs to 510 residues: Lysine--tRNA ligase (510 aa).

Positions 420 and 427 each coordinate Mg(2+).

Belongs to the class-II aminoacyl-tRNA synthetase family. Homodimer. Requires Mg(2+) as cofactor.

It localises to the cytoplasm. It carries out the reaction tRNA(Lys) + L-lysine + ATP = L-lysyl-tRNA(Lys) + AMP + diphosphate. The protein is Lysine--tRNA ligase of Clostridium novyi (strain NT).